The chain runs to 395 residues: Cystathionine beta-lyase MetC (395 aa).

Lys210 carries the post-translational modification N6-(pyridoxal phosphate)lysine.

It belongs to the trans-sulfuration enzymes family. Homotetramer; dimer of dimers. Requires pyridoxal 5'-phosphate as cofactor.

The protein resides in the cytoplasm. It catalyses the reaction L,L-cystathionine + H2O = L-homocysteine + pyruvate + NH4(+). It carries out the reaction L-cysteine + H2O = hydrogen sulfide + pyruvate + NH4(+) + H(+). The catalysed reaction is an S-substituted L-cysteine + H2O = a thiol + pyruvate + NH4(+). It functions in the pathway amino-acid biosynthesis; L-methionine biosynthesis via de novo pathway; L-homocysteine from L-cystathionine: step 1/1. With respect to regulation, L-cysteine inhibits cystathionine beta-lyase activity competitively. Inhibited by aminoethoxyvinylglycine (AVG). Primarily catalyzes the cleavage of cystathionine to homocysteine, pyruvate and ammonia during methionine biosynthesis. Also exhibits cysteine desulfhydrase activity, producing sulfide from cysteine. In addition, under certain growth conditions, exhibits significant alanine racemase coactivity. In Escherichia coli (strain K12), this protein is Cystathionine beta-lyase MetC.